Here is a 142-residue protein sequence, read N- to C-terminus: MKTFTAKPETVKRDWYVVDAEGKTLGRLATELARRLRGKHKAEYTPHVDTGDYLIVLNADKVAVTGNKRNDKIYYHYTGHVGGIKQATFEEMIARRPERVIEIAVKGMLPKGPLGRAMFRKLKVYAGTEHNHAAQQPQVLDI.

It belongs to the universal ribosomal protein uL13 family. In terms of assembly, part of the 50S ribosomal subunit.

This protein is one of the early assembly proteins of the 50S ribosomal subunit, although it is not seen to bind rRNA by itself. It is important during the early stages of 50S assembly. This chain is Large ribosomal subunit protein uL13, found in Sodalis glossinidius (strain morsitans).